Here is a 202-residue protein sequence, read N- to C-terminus: MNFLRKIVKNCKDEEIPKPGTPSAPPDDDDLWMPPPEYVPLTQIKGKENVRNFCINGEIKICSPNGYSFRILRHILKSFDNVYSGNRRLIGVVKVVIGLVLSASPVPEGMNWVYKLRRTLIFQWAESHGPLEGEELEYSQEITWDDEAEFVSLQIRVSAKQCHIQGRLWCINMNSKACQLWADMGLKTQQSQEDENTSLLLE.

A disordered region spans residues Asp-13–Trp-32. The PPXY motif motif lies at Pro-35 to Tyr-38.

Belongs to the lyssavirus matrix protein family. As to quaternary structure, homomultimer. Interacts with nucleoprotein and with the cytoplasmic domain of glycoprotein.

Its subcellular location is the virion membrane. The protein resides in the host endomembrane system. Functionally, plays a major role in assembly and budding of virion. Completely covers the ribonucleoprotein coil and keep it in condensed bullet-shaped form. Inhibits viral transcription and stimulates replication. Plays a major role in early induction of TRAIL-mediated apoptosis in infected neurons. The polypeptide is Matrix protein (M) (Lagos bat virus (LBV)).